A 311-amino-acid polypeptide reads, in one-letter code: Natural killer cell receptor 2B4 (311 aa).

The signal sequence occupies residues 1–19 (MLQQTVLLSLFLLLRAHQG). Topologically, residues 20–223 (QDCADSSEEV…CQSVPSKFNY (204 aa)) are extracellular. A disulfide bridge links Cys22 with Cys118. 2 Ig-like domains span residues 22–128 (CADS…LIFD) and 131–215 (ETPH…QSCQ). N-linked (GlcNAc...) asparagine glycosylation is found at Asn101, Asn144, Asn160, Asn183, Asn196, and Asn205. A disulfide bridge links Cys153 with Cys195. A helical transmembrane segment spans residues 224-247 (LPFMVSIGILVKFFHGAIDCFCVW). At 248-311 (NRKRKQSQSI…RRLFQFINRS (64 aa)) the chain is on the cytoplasmic side. The interval 275–301 (RDQRGHFRASGSSSDVRGDERGQRESD) is disordered. Basic and acidic residues predominate over residues 290–301 (VRGDERGQRESD).

Interacts with CD48. Interacts (via phosphorylated ITSM 1-4) with SH2D1A (via SH2 domain); SH2D1A probably mediates association with FYN. Interacts (via phosphorylated ITSM 3) with PTPN11/SHP-2, INPP5D/SHIP1, PTPN6/SHP-1 and CSK; binding of SH2D1A/SAP prevents association with PTPN11, PTPN6 and CSK; conflictingly a similar association has been described for phosphorylated ITSM 1 also including GRB2 and PLCG1. Interacts weakly (via phosphorylated ITSM 2) with PTPN11/SHP-2 and CSK. Interacts with SH2D1B. Interacts with PIK3R1; PI3K recruits SH2D1A. Interacts with MHC class I proteins; the interaction is proposed to prevent self-killing of NK cells. In terms of processing, N-linked glycosylation is essential for the binding to its ligand CD48. Also O-glycosylated, in contrast, O-linked sialylation has a negative impact on ligand binding. Post-translationally, phosphorylated by FYN and CSK on tyrosine residues following activation. Coligation with inhibitory receptors such as KIR2DL1 inhibits phosphorylation upon contact of NK cells with sensitive target cells.

Its subcellular location is the membrane. It is found in the cell membrane. The protein localises to the membrane raft. Its function is as follows. Heterophilic receptor of the signaling lymphocytic activation molecule (SLAM) family; its ligand is CD48. SLAM receptors triggered by homo- or heterotypic cell-cell interactions are modulating the activation and differentiation of a wide variety of immune cells and thus are involved in the regulation and interconnection of both innate and adaptive immune response. Activities are controlled by presence or absence of small cytoplasmic adapter proteins, SH2D1A/SAP and/or SH2D1B/EAT-2. Acts as activating natural killer (NK) cell receptor. Activating function implicates association with SH2D1A and FYN. Downstreaming signaling involves predominantly VAV1, and, to a lesser degree, INPP5D/SHIP1 and CBL. Signal attenuation in the absence of SH2D1A is proposed to be dependent on INPP5D and to a lesser extent PTPN6/SHP-1 and PTPN11/SHP-2. Stimulates NK cell cytotoxicity, production of IFN-gamma and granule exocytosis. Optimal expansion and activation of NK cells seems to be dependent on the engagement of CD244 with CD48 expressed on neighboring NK cells. Acts as costimulator in NK activation by enhancing signals by other NK receptors such as NCR3 and NCR1. At early stages of NK cell differentiation may function as an inhibitory receptor possibly ensuring the self-tolerance of developing NK cells. Involved in the regulation of CD8(+) T-cell proliferation; expression on activated T-cells and binding to CD48 provides costimulatory-like function for neighboring T-cells. Inhibits inflammatory responses in dendritic cells (DCs). The chain is Natural killer cell receptor 2B4 (Cd244) from Rattus norvegicus (Rat).